The primary structure comprises 389 residues: Large envelope protein (389 aa).

Methionine 1 is subject to N-acetylmethionine. Glycine 2 is lipidated: N-myristoyl glycine; by host. The segment at 2 to 108 is pre-S1; that stretch reads GQNLSTSNPL…PPLRTTHPQA (107 aa). Residues 2–163 are pre-S; that stretch reads GQNLSTSNPL…SSRIGDPALN (162 aa). Over 2-170 the chain is Virion surface; in external conformation; that stretch reads GQNLSTSNPL…ALNMENITSG (169 aa). Residues 2 to 242 lie on the Intravirion; in internal conformation side of the membrane; sequence GQNLSTSNPL…VGYRWMCLRR (241 aa). 2 disordered regions span residues 76–102 and 133–154; these read TLPA…PPLR and GGSS…LSTS. The segment covering 85 to 95 has biased composition (polar residues); that stretch reads STNRQSGRQPT. The interval 109 to 163 is pre-S2; sequence MQWNSTTFHQTLQDPRVRGLYLPAGGSSSGTVNPVPTTASPTLSTSSRIGDPALN. Residues 142–154 show a composition bias toward low complexity; it reads PVPTTASPTLSTS. A helical membrane pass occupies residues 171–191; sequence FLGPLLVLQAGFFLLTRILTI. The Intravirion; in external conformation portion of the chain corresponds to 192–242; that stretch reads PQSLDSWWTSLSFLGGTTVCLGQNSQSPTSNHSPTSCPPTCVGYRWMCLRR. Residues 243 to 263 traverse the membrane as a helical segment; it reads FIIFLFILLLCLIFLLVLLDY. The Virion surface segment spans residues 264–337; sequence QGMLPVCPLI…WASARFSWLS (74 aa). An N-linked (GlcNAc...) asparagine; by host glycan is attached at asparagine 309. A helical membrane pass occupies residues 338-358; it reads LLVPFVQWFVGLSPTVWLSVI. The Intravirion segment spans residues 359 to 364; the sequence is WMMWYW. A helical membrane pass occupies residues 365 to 387; sequence GPSLYNTLSPFLPLLPIFFYLWV. Residues 388–389 lie on the Virion surface side of the membrane; that stretch reads YI.

Belongs to the orthohepadnavirus major surface antigen family. As to quaternary structure, in its internal form (Li-HBsAg), interacts with the capsid protein and with the isoform S. Interacts with host chaperone CANX. In terms of assembly, associates with host chaperone CANX through its pre-S2 N glycan; this association may be essential for isoform M proper secretion. Interacts with isoform L. Interacts with the antigens of satellite virus HDV (HDVAgs); this interaction is required for encapsidation of HDV genomic RNA. Isoform M is N-terminally acetylated by host at a ratio of 90%, and N-glycosylated by host at the pre-S2 region. In terms of processing, myristoylated.

It localises to the virion membrane. The large envelope protein exists in two topological conformations, one which is termed 'external' or Le-HBsAg and the other 'internal' or Li-HBsAg. In its external conformation the protein attaches the virus to cell receptors and thereby initiating infection. This interaction determines the species specificity and liver tropism. This attachment induces virion internalization predominantly through caveolin-mediated endocytosis. The large envelope protein also assures fusion between virion membrane and endosomal membrane. In its internal conformation the protein plays a role in virion morphogenesis and mediates the contact with the nucleocapsid like a matrix protein. Its function is as follows. The middle envelope protein plays an important role in the budding of the virion. It is involved in the induction of budding in a nucleocapsid independent way. In this process the majority of envelope proteins bud to form subviral lipoprotein particles of 22 nm of diameter that do not contain a nucleocapsid. The polypeptide is Large envelope protein (Homo sapiens (Human)).